The chain runs to 54 residues: Hydrophobic protein RCI2A (54 aa).

2 helical membrane-spanning segments follow: residues 2–22 and 32–52; these read STAT…GVFL and ICLV…IYVL.

The protein belongs to the UPF0057 (PMP3) family.

The protein resides in the membrane. The polypeptide is Hydrophobic protein RCI2A (RCI2A) (Arabidopsis thaliana (Mouse-ear cress)).